A 138-amino-acid chain; its full sequence is Bis(5'-nucleosyl)-tetraphosphatase [asymmetrical] (138 aa).

The region spanning 1 to 132 is the Nudix hydrolase domain; it reads MVVKAAGLVI…EMGSLLRKFS (132 aa). The Nudix box signature appears at 37 to 58; it reads GHVDPGEDEWQAAIRETKEEAN.

This sequence belongs to the Nudix hydrolase family. As to quaternary structure, monomer. The cofactor is Mg(2+). Co(2+) serves as cofactor. It depends on Mn(2+) as a cofactor. Requires Zn(2+) as cofactor. Ca(2+) is required as a cofactor.

The catalysed reaction is P(1),P(4)-bis(5'-adenosyl) tetraphosphate + H2O = AMP + ATP + 2 H(+). Asymmetrically hydrolyzes Ap4A to yield AMP and ATP. This is Bis(5'-nucleosyl)-tetraphosphatase [asymmetrical] (ndx-4) from Caenorhabditis elegans.